A 242-amino-acid polypeptide reads, in one-letter code: Carboxy-S-adenosyl-L-methionine synthase (242 aa).

S-adenosyl-L-methionine contacts are provided by residues Y38, 63–65 (GCS), 88–89 (DN), 116–117 (DL), and R199.

The protein belongs to the class I-like SAM-binding methyltransferase superfamily. Cx-SAM synthase family. Homodimer.

The catalysed reaction is prephenate + S-adenosyl-L-methionine = carboxy-S-adenosyl-L-methionine + 3-phenylpyruvate + H2O. Functionally, catalyzes the conversion of S-adenosyl-L-methionine (SAM) to carboxy-S-adenosyl-L-methionine (Cx-SAM). In Methylococcus capsulatus (strain ATCC 33009 / NCIMB 11132 / Bath), this protein is Carboxy-S-adenosyl-L-methionine synthase.